Reading from the N-terminus, the 552-residue chain is Two-component response regulator ARR10 (552 aa).

Residues 18–133 (RVLAVDDDQT…ELKNIWQHVV (116 aa)) enclose the Response regulatory domain. D69 carries the post-translational modification 4-aspartylphosphate. Positions 139 to 181 (KKNKSNVSNGSGNCDKANRKRKEQYEEEEEEERGNDNDDPTAQ) are disordered. The stretch at 151-173 (NCDKANRKRKEQYEEEEEEERGN) forms a coiled coil. The segment covering 163–177 (YEEEEEEERGNDNDD) has biased composition (acidic residues). The short motif at 182 to 185 (KKPR) is the Nuclear localization signal element. Positions 185 to 235 (RVLWTHELHNKFLAAVDHLGVERAVPKKILDLMNVDKLTRENVASHLQKFR) form a DNA-binding region, myb-like GARP.

It belongs to the ARR family. Type-B subfamily. Binds the target DNA as a monomer. In terms of processing, two-component system major event consists of a His-to-Asp phosphorelay between a sensor histidine kinase (HK) and a response regulator (RR). In plants, the His-to-Asp phosphorelay involves an additional intermediate named Histidine-containing phosphotransfer protein (HPt). This multistep phosphorelay consists of a His-Asp-His-Asp sequential transfer of a phosphate group between first a His and an Asp of the HK protein, followed by the transfer to a conserved His of the HPt protein and finally the transfer to an Asp in the receiver domain of the RR protein. As to expression, detected in the whole plant. Predominantly expressed in roots and leaves.

The protein resides in the nucleus. Transcriptional activator that binds specifically to the DNA sequence 5'-[AG]GATT-3'. Functions as a response regulator involved in His-to-Asp phosphorelay signal transduction system. Phosphorylation of the Asp residue in the receiver domain activates the ability of the protein to promote the transcription of target genes. Could directly activate some type-A response regulators in response to cytokinins. The sequence is that of Two-component response regulator ARR10 (ARR10) from Arabidopsis thaliana (Mouse-ear cress).